A 297-amino-acid chain; its full sequence is L-threonate dehydrogenase (297 aa).

NAD(+)-binding positions include 3 to 31 (RNIG…VHAC) and Thr-97. Lys-173 is a catalytic residue. Lys-241 provides a ligand contact to NAD(+).

Belongs to the HIBADH-related family. L-threonate dehydrogenase subfamily.

The catalysed reaction is L-threonate + NAD(+) = 2-dehydro-L-erythronate + NADH + H(+). Catalyzes oxidation of L-threonate to 2-oxo-tetronate. Can use either NAD(+) or NADP(+) as cosubstrate, with a preference for NAD(+). This chain is L-threonate dehydrogenase, found in Cupriavidus necator (strain ATCC 17699 / DSM 428 / KCTC 22496 / NCIMB 10442 / H16 / Stanier 337) (Ralstonia eutropha).